A 296-amino-acid polypeptide reads, in one-letter code: Bifunctional protein FolD (296 aa).

Residues 168 to 170 (GRS), threonine 197, and valine 238 contribute to the NADP(+) site.

It belongs to the tetrahydrofolate dehydrogenase/cyclohydrolase family. As to quaternary structure, homodimer.

It carries out the reaction (6R)-5,10-methylene-5,6,7,8-tetrahydrofolate + NADP(+) = (6R)-5,10-methenyltetrahydrofolate + NADPH. The enzyme catalyses (6R)-5,10-methenyltetrahydrofolate + H2O = (6R)-10-formyltetrahydrofolate + H(+). It participates in one-carbon metabolism; tetrahydrofolate interconversion. Catalyzes the oxidation of 5,10-methylenetetrahydrofolate to 5,10-methenyltetrahydrofolate and then the hydrolysis of 5,10-methenyltetrahydrofolate to 10-formyltetrahydrofolate. The protein is Bifunctional protein FolD of Desulfotalea psychrophila (strain LSv54 / DSM 12343).